We begin with the raw amino-acid sequence, 471 residues long: Tetratricopeptide repeat protein 29 (471 aa).

TPR repeat units follow at residues 92–131 (DKLPEAAKAQSLFWQQRPLEDQPDKLDNFYHYLTRAEAAE), 136–173 (YEEVYNNLYALACYFDNSEDKWVRNHFYERCFNIAQLI), 182–215 (AEAESHMGLLFEEEGELLKAAEHYEAFHELTHGR), 234–267 (VRTYRLLSDRMLENKDYKQAIKILIKASEIAREG), 274–307 (GEASYYLGLAHLASGEYETALTVLNRYSEISTSL), 314–347 (GRAYEAIAKALQSQGETTEAINYLEKFVTIARNN), and 354–387 (IRACTMLGDIYNEKGQYSKASEYFQQAFSTAMEL). The segment at 449–471 (ATEDNIYQLPDAEEETRRSPENQ) is disordered.

In terms of tissue distribution, expressed in spermatozoa (at protein level).

It localises to the cytoplasm. The protein resides in the cytoskeleton. Its subcellular location is the flagellum axoneme. In terms of biological role, axonemal protein which is implicated in axonemal and/or peri-axonemal structure assembly and regulates flagellum assembly and beating and therefore sperm motility. The protein is Tetratricopeptide repeat protein 29 (Ttc29) of Mus musculus (Mouse).